Consider the following 168-residue polypeptide: Oleosin 18.2 kDa (168 aa).

Residue Ala2 is modified to N-acetylalanine. The interval 2-45 is polar; the sequence is AEVRDRNLPHQVQVHPQYRLDNTTGGGYGAKNYHSGPSTSQVLA. Transmembrane regions (helical) follow at residues 43 to 63, 76 to 96, and 97 to 117; these read VLAV…AGLT, PLFI…AMAV, and TGFL…SYVL. Residues 46-117 are hydrophobic; that stretch reads VLTLLPIGGT…TGLSSLSYVL (72 aa).

Belongs to the oleosin family.

The protein localises to the lipid droplet. It is found in the membrane. May have a structural role to stabilize the lipid body during desiccation of the seed by preventing coalescence of the oil. Probably interacts with both lipid and phospholipid moieties of lipid bodies. May also provide recognition signals for specific lipase anchorage in lipolysis during seedling growth. In Gossypium hirsutum (Upland cotton), this protein is Oleosin 18.2 kDa (MATP6-A).